Reading from the N-terminus, the 742-residue chain is Collectin-12 (742 aa).

The Cytoplasmic segment spans residues 1–37; the sequence is MKDDFAEEEEVQSFGYKRFGIQEGTQCTKCKNNWALK. The helical; Signal-anchor for type II membrane protein transmembrane segment at 38–58 threads the bilayer; the sequence is FSIILLYILCVLLTITIAILG. The Extracellular segment spans residues 59 to 742; it reads YKVVEKMDNV…DMDKEQIFGV (684 aa). Coiled coils occupy residues 71 to 101 and 271 to 334; these read GLET…GQKA and NNSA…QLEE. The interval 439-605 is disordered; it reads TILQGPPGPR…SEPTSVPEAN (167 aa). 2 consecutive Collagen-like domains span residues 467 to 526 and 527 to 586; these read GQKG…SGDP and GPPG…PGPP. Positions 475-492 are enriched in pro residues; sequence PGPPGPAGEKGPPGPIGP. Low complexity-rich tracts occupy residues 502-522 and 532-556; these read RGSP…LPGP and QGKD…VGEP. A compositionally biased stretch (pro residues) spans 571 to 589; it reads PGLPGPKGPPGPPGPPGPG. 3 disulfides stabilise this stretch: C607/C618, C635/C730, and C708/C722. Residues 614-731 form the C-type lectin domain; sequence YTEKCYYFSI…CEDVNNFICE (118 aa). Residues I644, N646, E650, D670, and E674 each coordinate Ca(2+). 3 residues coordinate a carbohydrate: K691, Q694, and D696. Residues Q694, D696, N697, E706, D707, N718, D719, and E731 each contribute to the Ca(2+) site. Position 706 (E706) interacts with a carbohydrate. Positions 718 and 719 each coordinate a carbohydrate.

In terms of tissue distribution, widely expressed.

The protein localises to the membrane. Functionally, scavenger receptor that displays several functions associated with host defense. Binds to carbohydrates. The protein is Collectin-12 (COLEC12) of Gallus gallus (Chicken).